A 787-amino-acid polypeptide reads, in one-letter code: Integrin beta-6 (787 aa).

Positions 1-21 (MGIELVCLFLLLLGRNDHVQG) are cleaved as a signal peptide. Residues 22–71 (GCAWGGAESCSDCLLTGPHCAWCSQENFTHLSGAGERCDTPANLLAKGCQ) form the PSI domain. Residues 22-708 (GCAWGGAESC…KDCPKPPNIP (687 aa)) are Extracellular-facing. Cystine bridges form between cysteine 23–cysteine 41, cysteine 31–cysteine 454, cysteine 34–cysteine 59, cysteine 44–cysteine 70, cysteine 197–cysteine 204, cysteine 252–cysteine 293, cysteine 394–cysteine 406, cysteine 426–cysteine 452, cysteine 456–cysteine 476, cysteine 467–cysteine 479, cysteine 481–cysteine 490, cysteine 492–cysteine 519, cysteine 502–cysteine 517, cysteine 511–cysteine 522, cysteine 524–cysteine 537, cysteine 539–cysteine 560, cysteine 544–cysteine 558, cysteine 552–cysteine 563, and cysteine 565–cysteine 574. N-linked (GlcNAc...) asparagine glycans are attached at residues asparagine 48 and asparagine 97. In terms of domain architecture, VWFA spans 131–371 (YPVDLYYLMD…QLIISAYEEL (241 aa)). Mg(2+)-binding residues include aspartate 140, serine 142, and serine 144. Serine 144, aspartate 147, aspartate 148, and glutamate 179 together coordinate Ca(2+). Residues asparagine 235, aspartate 237, proline 239, and glutamate 240 each contribute to the Ca(2+) site. Glutamate 240 provides a ligand contact to Mg(2+). Asparagine 260 carries an N-linked (GlcNAc...) asparagine glycan. The Ca(2+) site is built by aspartate 271 and lysine 355. The N-linked (GlcNAc...) asparagine glycan is linked to asparagine 387. N-linked (GlcNAc...) asparagine glycosylation is present at asparagine 418. I-EGF domains are found at residues 456-491 (CQREIETNSSKCHNGNGSFQCGVCTCNPGHMGPHCE), 492-538 (CGED…PYCQ), 539-575 (CDNFSCLRHKGLLCGDNGDCDCGECVCRDGWTGEYCN), and 576-615 (CTTNRDSCTSEDGVLCSGRGDCVCGKCVCRNPGASGPTCE). Residues asparagine 463 and asparagine 471 are each glycosylated (N-linked (GlcNAc...) asparagine). Residue asparagine 541 is glycosylated (N-linked (GlcNAc...) asparagine). Asparagine 575 carries N-linked (GlcNAc...) asparagine glycosylation. 9 disulfide bridges follow: cysteine 576–cysteine 599, cysteine 583–cysteine 597, cysteine 591–cysteine 602, cysteine 604–cysteine 614, cysteine 617–cysteine 620, cysteine 624–cysteine 669, cysteine 630–cysteine 649, cysteine 633–cysteine 645, and cysteine 677–cysteine 701. Residues 709–729 (MIMLGVSLAILLIGVVLLCIW) form a helical membrane-spanning segment. The segment at 730-757 (KLLVSFHDRKEVAKFEAERSKAKWQTGT) is interaction with HAX1. The Cytoplasmic portion of the chain corresponds to 730-787 (KLLVSFHDRKEVAKFEAERSKAKWQTGTNPLYRGSTSTFKNVTYKHREKHKAGLSSDG).

It belongs to the integrin beta chain family. In terms of assembly, heterodimer of an alpha and a beta subunit. Interacts with FLNB. Interacts with HAX1. ITGAV:ITGB6 interacts with FBN1. ITGAV:ITGB6 interacts with TGFB1.

Its subcellular location is the cell membrane. The protein localises to the cell junction. The protein resides in the focal adhesion. Integrin alpha-V:beta-6 (ITGAV:ITGB6) is a receptor for fibronectin and cytotactin. It recognizes the sequence R-G-D in its ligands. ITGAV:ITGB6 acts as a receptor for fibrillin-1 (FBN1) and mediates R-G-D-dependent cell adhesion to FBN1. Integrin alpha-V:beta-6 (ITGAV:ITGB6) mediates R-G-D-dependent release of transforming growth factor beta-1 (TGF-beta-1) from regulatory Latency-associated peptide (LAP), thereby playing a key role in TGF-beta-1 activation. The protein is Integrin beta-6 (Itgb6) of Mus musculus (Mouse).